Reading from the N-terminus, the 64-residue chain is Large ribosomal subunit protein bL35 (64 aa).

Residues 18–39 (GSGLVKHYPSNKHHKNTHKKEN) are disordered. Over residues 26-39 (PSNKHHKNTHKKEN) the composition is skewed to basic residues.

The protein belongs to the bacterial ribosomal protein bL35 family.

In Symbiobacterium thermophilum (strain DSM 24528 / JCM 14929 / IAM 14863 / T), this protein is Large ribosomal subunit protein bL35.